Here is a 494-residue protein sequence, read N- to C-terminus: Nicotianamine aminotransferase 1 (494 aa).

Low complexity-rich tracts occupy residues Ser24–Ser38 and Ser48–Ser62. The segment at Ser24–Arg76 is disordered. N6-(pyridoxal phosphate)lysine is present on Lys322.

Belongs to the class-I pyridoxal-phosphate-dependent aminotransferase family. It depends on pyridoxal 5'-phosphate as a cofactor. As to expression, expressed in companion and pericycle cells adjacent to the protoxylem of roots. Expressed in companion cells of shoots.

The enzyme catalyses nicotianamine + 2-oxoglutarate = 3''-deamino-3''-oxonicotianamine + L-glutamate. Its function is as follows. Involved in biosynthesis of mugineic acid family phytosiderophores, which are ferric iron chelators produced in graminaceous plants in response to iron deficiency. The chain is Nicotianamine aminotransferase 1 from Oryza sativa subsp. japonica (Rice).